A 422-amino-acid chain; its full sequence is Putative polyketide beta-ketoacyl synthase 1 (422 aa).

The 415-residue stretch at 2–416 folds into the Ketosynthase family 3 (KS3) domain; sequence SRRVVVTGIG…GFQSAVVLTG (415 aa). Residues cysteine 169, histidine 309, and histidine 346 each act as for beta-ketoacyl synthase activity in the active site.

Belongs to the thiolase-like superfamily. Beta-ketoacyl-ACP synthases family.

In terms of biological role, involved in developmentally regulated synthesis of a compound biosynthetically related to polyketide antibiotics which is essential for spore color in Streptomyces halstedii. In Streptomyces halstedii, this protein is Putative polyketide beta-ketoacyl synthase 1 (sch1).